The following is a 158-amino-acid chain: Small ribosomal subunit protein uS9 (158 aa).

It belongs to the universal ribosomal protein uS9 family.

This Rhodopseudomonas palustris (strain HaA2) protein is Small ribosomal subunit protein uS9.